Here is a 334-residue protein sequence, read N- to C-terminus: Malate dehydrogenase 2 (334 aa).

An NAD(+)-binding site is contributed by 12–18 (GAAGRVA). Substrate is bound by residues arginine 93 and arginine 99. Residues asparagine 106, glutamine 113, and 130-132 (VGN) contribute to the NAD(+) site. Substrate-binding residues include asparagine 132 and arginine 166. The active-site Proton acceptor is histidine 191.

The protein belongs to the LDH/MDH superfamily. MDH type 2 family.

The catalysed reaction is (S)-malate + NAD(+) = oxaloacetate + NADH + H(+). Functionally, catalyzes the reversible oxidation of malate to oxaloacetate. This Albidiferax ferrireducens (strain ATCC BAA-621 / DSM 15236 / T118) (Rhodoferax ferrireducens) protein is Malate dehydrogenase 2.